The chain runs to 142 residues: Probable signal recognition particle 19 kDa protein (142 aa).

Residues 115–142 (KTRQPGYTAPSVASSSAAAAGKKNKKKK) are disordered. The segment covering 123 to 135 (APSVASSSAAAAG) has biased composition (low complexity).

It belongs to the SRP19 family. As to quaternary structure, component of a signal recognition particle complex that consists of a 7SL RNA molecule of 300 nucleotides and six protein subunits: srpa-72, srpa-68, SRP54, F37F2.2/SRP19, F25G6.8/SRP14 and ZK512.4/SRP9.

It localises to the cytoplasm. The protein localises to the nucleus. Its subcellular location is the nucleolus. Component of the signal recognition particle (SRP) complex, a ribonucleoprotein complex that mediates the cotranslational targeting of secretory and membrane proteins to the endoplasmic reticulum (ER). Binds directly to 7SL RNA. Mediates binding of SRP54 to the SRP complex. The polypeptide is Probable signal recognition particle 19 kDa protein (Caenorhabditis elegans).